Here is a 579-residue protein sequence, read N- to C-terminus: MFS-type transporter ppz2 (579 aa).

Residues 1–23 are disordered; the sequence is MQTATALEDSANAPSPAASSQGQ. Positions 10 to 20 are enriched in low complexity; sequence SANAPSPAASS. A glycan (N-linked (GlcNAc...) asparagine) is linked at Asn38. 14 helical membrane-spanning segments follow: residues 48-68, 83-103, 121-141, 145-165, 171-191, 203-223, 236-256, 269-289, 298-318, 336-356, 374-394, 403-423, 438-460, and 516-536; these read ALIM…NTII, AAYT…TMVW, LCFF…MLIA, IQGI…GDLF, GLYY…GPVV, WCFY…ILLL, IAAI…MILL, SATV…CFSW, LLPV…ACFI, AVLG…AVSI, LTPI…FIDL, IIVF…APMV, TSAY…QTVF, and SMWI…PFLG.

The protein belongs to the major facilitator superfamily. TCR/Tet family.

The protein localises to the membrane. Its function is as follows. MFS-type transporter; part of the gene cluster that mediates the biosynthesis of pyrrolopyrazines, secondary metabolites showing insecticidal activity. Probably involved in the secretion of peramine and other pyrrolopyrazines. The polypeptide is MFS-type transporter ppz2 (Metarhizium majus (strain ARSEF 297)).